A 295-amino-acid chain; its full sequence is Nucleotide-binding protein BLi03725/BL03417 (295 aa).

G16–T23 serves as a coordination point for ATP. A GTP-binding site is contributed by D67–G70.

It belongs to the RapZ-like family.

Displays ATPase and GTPase activities. This is Nucleotide-binding protein BLi03725/BL03417 from Bacillus licheniformis (strain ATCC 14580 / DSM 13 / JCM 2505 / CCUG 7422 / NBRC 12200 / NCIMB 9375 / NCTC 10341 / NRRL NRS-1264 / Gibson 46).